The primary structure comprises 93 residues: UPF0223 protein str0998 (93 aa).

Belongs to the UPF0223 family.

The chain is UPF0223 protein str0998 from Streptococcus thermophilus (strain CNRZ 1066).